A 152-amino-acid chain; its full sequence is Clitocypin-4/-3 (152 aa).

It belongs to the protease inhibitor I48 family. As to quaternary structure, homodimer.

In terms of biological role, binds and inhibits cysteine proteinases. Inhibits most strongly papain and cathepsin L, more weakly bromelain and cathepsin B while it is completely ineffective against cathepsin H. In Clitocybe nebularis (Clouded agaric), this protein is Clitocypin-4/-3 (clt4).